A 527-amino-acid chain; its full sequence is Putative ABC transporter peptide-binding protein BOV_A0352 (527 aa).

An N-terminal signal peptide occupies residues 1–23 (MRLRNFYSALALSAAVFAGPLYA).

The protein belongs to the bacterial solute-binding protein 5 family. In terms of assembly, the complex is composed of two ATP-binding proteins (BOV_A0347 and BOV_A0348), two transmembrane proteins (BOV_A0350 and BOV_A0351) and a solute-binding protein (BOV_A0352).

The protein localises to the periplasm. Functionally, probably part of an ABC transporter complex that could be involved in peptide import. The polypeptide is Putative ABC transporter peptide-binding protein BOV_A0352 (Brucella ovis (strain ATCC 25840 / 63/290 / NCTC 10512)).